Here is a 102-residue protein sequence, read N- to C-terminus: NADH-quinone oxidoreductase subunit K 1 (102 aa).

3 helical membrane-spanning segments follow: residues 5 to 25 (FEHV…CVLV), 30 to 50 (LIML…AFVG), and 65 to 85 (LVIM…VVYL).

The protein belongs to the complex I subunit 4L family. As to quaternary structure, NDH-1 is composed of 14 different subunits. Subunits NuoA, H, J, K, L, M, N constitute the membrane sector of the complex.

Its subcellular location is the cell inner membrane. The enzyme catalyses a quinone + NADH + 5 H(+)(in) = a quinol + NAD(+) + 4 H(+)(out). Functionally, NDH-1 shuttles electrons from NADH, via FMN and iron-sulfur (Fe-S) centers, to quinones in the respiratory chain. The immediate electron acceptor for the enzyme in this species is believed to be ubiquinone. Couples the redox reaction to proton translocation (for every two electrons transferred, four hydrogen ions are translocated across the cytoplasmic membrane), and thus conserves the redox energy in a proton gradient. The sequence is that of NADH-quinone oxidoreductase subunit K 1 from Geobacter metallireducens (strain ATCC 53774 / DSM 7210 / GS-15).